The primary structure comprises 198 residues: Recombination protein RecR (198 aa).

The C4-type zinc-finger motif lies at 56 to 71 (CTTCGNIDTHDPCAIC). A Toprim domain is found at 79–174 (RSLCVVEEVS…RLTQLAHGLP (96 aa)).

This sequence belongs to the RecR family.

In terms of biological role, may play a role in DNA repair. It seems to be involved in an RecBC-independent recombinational process of DNA repair. It may act with RecF and RecO. The polypeptide is Recombination protein RecR (Sphingopyxis alaskensis (strain DSM 13593 / LMG 18877 / RB2256) (Sphingomonas alaskensis)).